The primary structure comprises 473 residues: H(+)/Cl(-) exchange transporter ClcA (473 aa).

Residues 1–32 (MKTDTPSLETPQAARLRRRQLIRQLLERDKTP) lie on the Cytoplasmic side of the membrane. The helical transmembrane segment at 33-69 (LAILFMAAVVGTLVGLAAVAFDKGVAWLQNQRMGALV) threads the bilayer. Residues 70–76 (HTADNYP) lie on the Periplasmic side of the membrane. Residues 77–100 (LLLTVAFLCSAVLAMFGYFLVRKY) form a helical membrane-spanning segment. A Selectivity filter part_1 motif is present at residues 106–110 (GSGIP). Ser107 contacts chloride. Residues 109-116 (IPEIEGAL) constitute an intramembrane region (helical). Residues 117 to 123 (EDQRPVR) are Cytoplasmic-facing. The next 2 membrane-spanning stretches (helical) occupy residues 124-141 (WWRV…TLGG) and 148-166 (EGPT…LDVF). Positions 146–150 (GREGP) match the Selectivity filter part_2 motif. Residues 167 to 176 (RLKGDEARHT) are Cytoplasmic-facing. 2 intramembrane regions (helical) span residues 177 to 189 (LLAT…LAAA) and 193 to 201 (PLAGILFII). Residues 202 to 214 (EEMRPQFRYTLIS) are Cytoplasmic-facing. Residues 215-232 (IKAVFIGVIMSTIMYRIF) traverse the membrane as a helical segment. Residues 233 to 252 (NHEVALIDVGKLSDAPLNTL) lie on the Periplasmic side of the membrane. A helical transmembrane segment spans residues 253 to 281 (WLYLILGIIFGIFGPIFNKWVLGMQDLLH). Over 282–287 (RVHGGN) the chain is Cytoplasmic. Residues 288 to 309 (ITKWVLMGGAIGGLCGLLGFVA) traverse the membrane as a helical segment. At 310–329 (PATSGGGFNLIPIATAGNFS) the chain is on the periplasmic side. Helical transmembrane passes span 330 to 349 (MGML…LCFS) and 355 to 376 (GIFA…MVAV). The Selectivity filter part_3 motif lies at 355-359 (GIFAP). Chloride contacts are provided by Ile356 and Phe357. At 377 to 386 (ELFPQYHLEA) the chain is on the periplasmic side. The segment at residues 387-401 (GTFAIAGMGALLAAS) is an intramembrane region (helical). An intramembrane region (note=Loop between two helices) is located at residues 402–404 (IRA). Residues 405 to 416 (PLTGIILVLEMT) constitute an intramembrane region (helical). The note=Loop between two helices intramembrane region spans 417–421 (DNYQL). A helical transmembrane segment spans residues 422–438 (ILPMIITGLGATLLAQF). Topologically, residues 439–473 (TGGKPLYSAILARTLAKQEAEQLARSKAASASENT) are cytoplasmic. Chloride is bound at residue Tyr445.

The protein belongs to the chloride channel (TC 2.A.49) family. ClcA subfamily. In terms of assembly, homodimer.

It localises to the cell inner membrane. The catalysed reaction is 2 chloride(in) + H(+)(out) = 2 chloride(out) + H(+)(in). Proton-coupled chloride transporter. Functions as antiport system and exchanges two chloride ions for 1 proton. Probably acts as an electrical shunt for an outwardly-directed proton pump that is linked to amino acid decarboxylation, as part of the extreme acid resistance (XAR) response. This Escherichia coli O157:H7 protein is H(+)/Cl(-) exchange transporter ClcA.